The following is a 245-amino-acid chain: Type I iodothyronine deiodinase (245 aa).

The Extracellular portion of the chain corresponds to 1 to 9; that stretch reads LSIRVLLHK. The helical; Signal-anchor for type III membrane protein transmembrane segment at 10-30 threads the bilayer; that stretch reads LLILLQVTLSVVVGKTMMILF. Residues 31–245 are Cytoplasmic-facing; that stretch reads PDTTKRYILK…EIRAVLEKLK (215 aa). The active site involves Sec123. Position 123 (Sec123) is a non-standard amino acid, selenocysteine.

The protein belongs to the iodothyronine deiodinase family. Predominantly monomer. Can form homodimers but homodimerization is not essential for enzyme activity.

The protein resides in the cell membrane. Its subcellular location is the endoplasmic reticulum membrane. It is found in the basolateral cell membrane. It catalyses the reaction 3,3',5-triiodo-L-thyronine + iodide + A + H(+) = L-thyroxine + AH2. The enzyme catalyses 3,3',5'-triiodo-L-thyronine + iodide + A + H(+) = L-thyroxine + AH2. It carries out the reaction 3,3'-diiodo-L-thyronine + iodide + A + H(+) = 3,3',5'-triiodo-L-thyronine + AH2. The catalysed reaction is 3,3'-diiodo-L-thyronine + iodide + A + H(+) = 3,3',5-triiodo-L-thyronine + AH2. It catalyses the reaction 3'-iodo-L-thyronine + iodide + A + H(+) = 3',5'-diiodo-L-thyronine + AH2. The enzyme catalyses 3-iodo-L-thyronine + iodide + A + H(+) = 3,5-diiodo-L-thyronine + AH2. It carries out the reaction 3-iodo-L-thyronine + iodide + A + H(+) = 3,3'-diiodo-L-thyronine + AH2. The catalysed reaction is 3,3'-diiodothyronamine + iodide + A + H(+) = 3,3',5'-triiodothyronamine + AH2. It catalyses the reaction 3'-iodothyronamine + iodide + A + H(+) = 3',5'-diiodothyronamine + AH2. The enzyme catalyses 3-iodothyronamine + iodide + A + H(+) = 3,3'-diiodothyronamine + AH2. It carries out the reaction 3,3'-diiodothyronamine + iodide + A + H(+) = 3,3',5-triiodothyronamine + AH2. The catalysed reaction is 3-iodothyronamine + iodide + A + H(+) = 3,5-diiodothyronamine + AH2. It catalyses the reaction 3,3'-diiodo-L-thyronine sulfate + iodide + A + H(+) = 3,3',5'-triiodo-L-thyronine sulfate + AH2. The enzyme catalyses 3,3',5'-triiodo-L-thyronine sulfate + iodide + A + H(+) = L-thyroxine sulfate + AH2. It carries out the reaction 3,3'-diiodo-L-thyronine sulfate + iodide + A + H(+) = 3,3',5-triiodo-L-thyronine sulfate + AH2. Its function is as follows. Plays a crucial role in the metabolism of thyroid hormones (TH) and has specific roles in TH activation and inactivation by deiodination. Catalyzes the deiodiantion of L-thyroxine (T4) to 3,5,3'-triiodothyronine (T3) and 3,3',5'-triiodothyronine (rT3) to 3,3'-diiodothyronine (3,3'-T2) via outer-ring deiodination (ORD). Catalyzes the deiodiantion of T4 to rT3, T3 to 3,3'-T2, 3,5-diiodothyronine (3,5-T2) to 3-monoiodothyronine (3-T1) and 3,3'-T2 to 3-T1 via inner-ring deiodination (IRD). Catalyzes the deiodiantion of 3',5'-diiodothyronine (3',5'-T2) to 3'-monoiodothyronine (3'-T1) via ORD. Catalyzes the phenolic ring deiodinations of 3,3',5'-triiodothyronamine, 3',5'-diiodothyronamine and 3,3'-diiodothyronamine as well as tyrosyl ring deiodinations of 3,5,3'-triiodothyronamine and 3,5-diiodothyronamine. Catalyzes the deiodination of L-thyroxine sulfate and 3,3',5-triiodo-L-thyronine sulfate via IRD and of 3,3',5'-triiodo-L-thyronine sulfate via ORD. The polypeptide is Type I iodothyronine deiodinase (DIO1) (Gallus gallus (Chicken)).